Reading from the N-terminus, the 131-residue chain is Large ribosomal subunit protein bL12 (131 aa).

This sequence belongs to the bacterial ribosomal protein bL12 family. In terms of assembly, homodimer. Part of the ribosomal stalk of the 50S ribosomal subunit. Forms a multimeric L10(L12)X complex, where L10 forms an elongated spine to which 2 to 4 L12 dimers bind in a sequential fashion. Binds GTP-bound translation factors.

Forms part of the ribosomal stalk which helps the ribosome interact with GTP-bound translation factors. Is thus essential for accurate translation. The chain is Large ribosomal subunit protein bL12 from Tropheryma whipplei (strain Twist) (Whipple's bacillus).